We begin with the raw amino-acid sequence, 374 residues long: MDEEFVVTPWEVRGRVDYQKLMQQFGARPLTQAEVSLLEKYAGEVHPLIRRGFFYAHRDLDAILKWHGEGKPWALYTGRGPSGPVHIGHMVPWILLKWLSDKFGVEVYFQMTDDEKFYDDPEMRLEEATKWAYENALDVIALGFTPDKLHLIIDTKDIKPLYPIAAKVAKKLTWNTVKATFGFTDSTNIGLIFYPSLQIAVAFLPTELHGRPTPVLIPCAIDQDPYFRLARDIAESLGYPKPATLYSKFIMALTGESKMSASNPNSAIYTIDDEKTIRRKIANAYTGGRPTAEEQRRLGGNPDVCPVYHYHMLFDPDDASVEKIYHSCKSGALLCGECKQMLYEKIRKFVKQHQEAREKARDKVDAYRLSSKLS.

Positions 81–89 (PSGPVHIGH) match the 'HIGH' region motif. Positions 258–262 (KMSAS) match the 'KMSKS' region motif.

It belongs to the class-I aminoacyl-tRNA synthetase family.

Its subcellular location is the cytoplasm. It catalyses the reaction tRNA(Trp) + L-tryptophan + ATP = L-tryptophyl-tRNA(Trp) + AMP + diphosphate + H(+). The sequence is that of Tryptophan--tRNA ligase from Pyrobaculum calidifontis (strain DSM 21063 / JCM 11548 / VA1).